The chain runs to 109 residues: Cell division protein ZapA (109 aa).

Residues Glu22–Arg99 adopt a coiled-coil conformation.

The protein belongs to the ZapA family. Type 1 subfamily. As to quaternary structure, homodimer. Interacts with FtsZ.

It is found in the cytoplasm. In terms of biological role, activator of cell division through the inhibition of FtsZ GTPase activity, therefore promoting FtsZ assembly into bundles of protofilaments necessary for the formation of the division Z ring. It is recruited early at mid-cell but it is not essential for cell division. In Yersinia enterocolitica serotype O:8 / biotype 1B (strain NCTC 13174 / 8081), this protein is Cell division protein ZapA.